A 315-amino-acid chain; its full sequence is tRNA dimethylallyltransferase (315 aa).

14–21 contacts ATP; sequence GPTASGKT. Residue 16 to 21 participates in substrate binding; it reads TASGKT. Interaction with substrate tRNA regions lie at residues 39–42, 163–167, and 248–253; these read DSAL, QRIQR, and RCVGYR.

The protein belongs to the IPP transferase family. In terms of assembly, monomer. The cofactor is Mg(2+).

The enzyme catalyses adenosine(37) in tRNA + dimethylallyl diphosphate = N(6)-dimethylallyladenosine(37) in tRNA + diphosphate. In terms of biological role, catalyzes the transfer of a dimethylallyl group onto the adenine at position 37 in tRNAs that read codons beginning with uridine, leading to the formation of N6-(dimethylallyl)adenosine (i(6)A). This chain is tRNA dimethylallyltransferase, found in Paraburkholderia phytofirmans (strain DSM 17436 / LMG 22146 / PsJN) (Burkholderia phytofirmans).